Here is a 135-residue protein sequence, read N- to C-terminus: MKIGALAKALGCTVETIRYYEQQGLIPPPKRTSGNFRQYNEEHLQRLSFICNCRNLDISLSEIKSLLNLENASKQQAEEINRVLDKHIKEVATRIHELAHLRMKLIELREKTVSNDEDPMKLLLQHSGVKFVRLK.

The region spanning 1–69 is the HTH merR-type domain; that stretch reads MKIGALAKAL…LSEIKSLLNL (69 aa). Positions 4–23 form a DNA-binding region, H-T-H motif; the sequence is GALAKALGCTVETIRYYEQQ.

Transcriptional regulator. The protein is HTH-type transcriptional regulator ZntR homolog (zntR) of Haemophilus influenzae (strain ATCC 51907 / DSM 11121 / KW20 / Rd).